The sequence spans 222 residues: GTP cyclohydrolase 1 (222 aa).

The Zn(2+) site is built by Cys111, His114, and Cys182.

The protein belongs to the GTP cyclohydrolase I family. As to quaternary structure, toroid-shaped homodecamer, composed of two pentamers of five dimers.

It carries out the reaction GTP + H2O = 7,8-dihydroneopterin 3'-triphosphate + formate + H(+). It participates in cofactor biosynthesis; 7,8-dihydroneopterin triphosphate biosynthesis; 7,8-dihydroneopterin triphosphate from GTP: step 1/1. The polypeptide is GTP cyclohydrolase 1 (Klebsiella pneumoniae subsp. pneumoniae (strain ATCC 700721 / MGH 78578)).